The following is a 394-amino-acid chain: 1-deoxy-D-xylulose 5-phosphate reductoisomerase (394 aa).

Residues threonine 14, glycine 15, serine 16, isoleucine 17, glycine 40, and asparagine 128 each coordinate NADPH. Lysine 129 is a binding site for 1-deoxy-D-xylulose 5-phosphate. Glutamate 130 contributes to the NADPH binding site. Aspartate 154 lines the Mn(2+) pocket. The 1-deoxy-D-xylulose 5-phosphate site is built by serine 155, glutamate 156, serine 180, and histidine 203. Glutamate 156 contacts Mn(2+). Residue glycine 209 participates in NADPH binding. 4 residues coordinate 1-deoxy-D-xylulose 5-phosphate: serine 216, asparagine 221, lysine 222, and glutamate 225. Glutamate 225 serves as a coordination point for Mn(2+).

It belongs to the DXR family. It depends on Mg(2+) as a cofactor. Mn(2+) serves as cofactor.

It carries out the reaction 2-C-methyl-D-erythritol 4-phosphate + NADP(+) = 1-deoxy-D-xylulose 5-phosphate + NADPH + H(+). It participates in isoprenoid biosynthesis; isopentenyl diphosphate biosynthesis via DXP pathway; isopentenyl diphosphate from 1-deoxy-D-xylulose 5-phosphate: step 1/6. In terms of biological role, catalyzes the NADPH-dependent rearrangement and reduction of 1-deoxy-D-xylulose-5-phosphate (DXP) to 2-C-methyl-D-erythritol 4-phosphate (MEP). This Xylella fastidiosa (strain M23) protein is 1-deoxy-D-xylulose 5-phosphate reductoisomerase.